The sequence spans 459 residues: UDP-N-acetylmuramoylalanine--D-glutamate ligase (459 aa).

Position 118–124 (118–124) interacts with ATP; that stretch reads GTNGKTT.

The protein belongs to the MurCDEF family.

The protein localises to the cytoplasm. The enzyme catalyses UDP-N-acetyl-alpha-D-muramoyl-L-alanine + D-glutamate + ATP = UDP-N-acetyl-alpha-D-muramoyl-L-alanyl-D-glutamate + ADP + phosphate + H(+). It participates in cell wall biogenesis; peptidoglycan biosynthesis. Functionally, cell wall formation. Catalyzes the addition of glutamate to the nucleotide precursor UDP-N-acetylmuramoyl-L-alanine (UMA). This Desulfosudis oleivorans (strain DSM 6200 / JCM 39069 / Hxd3) (Desulfococcus oleovorans) protein is UDP-N-acetylmuramoylalanine--D-glutamate ligase.